The following is a 335-amino-acid chain: SLAM family member 7 (335 aa).

A signal peptide spans 1–22 (MAGSPTCLTLIYILWQLTGSAA). The Ig-like V-type domain maps to 23–124 (SGPVKELVGS…PSTQEYVLHV (102 aa)). Over 23–226 (SGPVKELVGS…GAADDPDSSM (204 aa)) the chain is Extracellular. Residues asparagine 98, asparagine 142, asparagine 148, asparagine 172, asparagine 176, and asparagine 204 are each glycosylated (N-linked (GlcNAc...) asparagine). Positions 131 to 206 (PKVTMGLQSN…ARNPVSRNFS (76 aa)) constitute an Ig-like C2-type domain. Disulfide bonds link cysteine 145/cysteine 215 and cysteine 151/cysteine 195. Residues 227-247 (VLLCLLLVPLLLSLFVLGLFL) traverse the membrane as a helical segment. Topologically, residues 248 to 335 (WFLKRERQEE…PRLFAYENVI (88 aa)) are cytoplasmic. The segment at 278 to 296 (SGENTEYDTIPHTNRTILK) is interaction with FYN when phosphorylated at Tyr-284. Positions 302 to 307 (TVYSTV) match the ITSM motif.

As to quaternary structure, isoform 1 binds to SH2D1A when its cytoplasmic tail is phosphorylated in the presence of FYN (in vitro); low affinity binding, the physiological relevance of the interaction is questioned. Interacts with SH2D1B; in NK cells. Interacts (via ITSM phosphorylated on Tyr-302) with SH2D1B, PTPN6/SHP-1, PTPN11/SHP-2, INPP5D/SHIP1, CSK and FYN. As to expression, expressed in spleen, lymph node, peripheral blood leukocytes, bone marrow, small intestine, stomach, appendix, lung and trachea. Expression was detected in NK cells, activated B-cells, NK-cell line but not in promyelocytic, B-, or T-cell lines. Expressed in monocytes. Isoform 3 is expressed at much lower level than isoform 1.

The protein resides in the membrane. Self-ligand receptor of the signaling lymphocytic activation molecule (SLAM) family. SLAM receptors triggered by homo- or heterotypic cell-cell interactions are modulating the activation and differentiation of a wide variety of immune cells and thus are involved in the regulation and interconnection of both innate and adaptive immune response. Activities are controlled by presence or absence of small cytoplasmic adapter proteins, SH2D1A/SAP and/or SH2D1B/EAT-2. Isoform 1 mediates NK cell activation through a SH2D1A-independent extracellular signal-regulated ERK-mediated pathway. Positively regulates NK cell functions by a mechanism dependent on phosphorylated SH2D1B. Downstream signaling implicates PLCG1, PLCG2 and PI3K. In addition to heterotypic NK cells-target cells interactions also homotypic interactions between NK cells may contribute to activation. However, in the absence of SH2D1B, inhibits NK cell function. Also acts inhibitory in T-cells. May play a role in lymphocyte adhesion. In LPS-activated monocytes negatively regulates production of pro-inflammatory cytokines. Functionally, isoform 3 does not mediate any NK cell activation. This chain is SLAM family member 7 (SLAMF7), found in Homo sapiens (Human).